The sequence spans 322 residues: Protein farnesyltransferase/geranylgeranyltransferase type-1 subunit alpha (322 aa).

The interval 1 to 27 (MSSSEEDDGYVPFSKRPEWSDVKPLAQ) is disordered. 6 PFTA repeats span residues 62-95 (RVLD…EQDE), 103-136 (QEMN…IGSD), 138-171 (KEKE…RDWN), 173-205 (ELAM…NPSP), 213-246 (REVE…KIST), and 287-321 (NSLN…LKLI).

Belongs to the protein prenyltransferase subunit alpha family. As to quaternary structure, heterodimer of fntA and fntB (farnesyltransferase). Heterodimer of an alpha and a beta subunit. Mg(2+) serves as cofactor.

The catalysed reaction is L-cysteinyl-[protein] + (2E,6E)-farnesyl diphosphate = S-(2E,6E)-farnesyl-L-cysteinyl-[protein] + diphosphate. The enzyme catalyses geranylgeranyl diphosphate + L-cysteinyl-[protein] = S-geranylgeranyl-L-cysteinyl-[protein] + diphosphate. Catalyzes the transfer of a farnesyl or geranyl-geranyl moiety from farnesyl or geranyl-geranyl diphosphate to a cysteine at the fourth position from the C-terminus of several proteins having the C-terminal sequence Cys-aliphatic-aliphatic-X. The alpha subunit is thought to participate in a stable complex with the substrate. The beta subunit binds the peptide substrate. The sequence is that of Protein farnesyltransferase/geranylgeranyltransferase type-1 subunit alpha (fntA) from Dictyostelium discoideum (Social amoeba).